The sequence spans 144 residues: Large ribosomal subunit protein uL16 (144 aa).

Residues Met-1–Arg-14 show a composition bias toward basic residues. Residues Met-1–Asn-25 are disordered.

Belongs to the universal ribosomal protein uL16 family. Part of the 50S ribosomal subunit.

In terms of biological role, binds 23S rRNA and is also seen to make contacts with the A and possibly P site tRNAs. This Moorella thermoacetica (strain ATCC 39073 / JCM 9320) protein is Large ribosomal subunit protein uL16.